The sequence spans 62 residues: Photosystem II reaction center protein Z (62 aa).

Transmembrane regions (helical) follow at residues 8–28 and 41–61; these read AIFA…VVFA and FSGT…NSLI.

It belongs to the PsbZ family. As to quaternary structure, PSII is composed of 1 copy each of membrane proteins PsbA, PsbB, PsbC, PsbD, PsbE, PsbF, PsbH, PsbI, PsbJ, PsbK, PsbL, PsbM, PsbT, PsbY, PsbZ, Psb30/Ycf12, at least 3 peripheral proteins of the oxygen-evolving complex and a large number of cofactors. It forms dimeric complexes.

It localises to the plastid. Its subcellular location is the chloroplast thylakoid membrane. In terms of biological role, may control the interaction of photosystem II (PSII) cores with the light-harvesting antenna, regulates electron flow through the 2 photosystem reaction centers. PSII is a light-driven water plastoquinone oxidoreductase, using light energy to abstract electrons from H(2)O, generating a proton gradient subsequently used for ATP formation. The chain is Photosystem II reaction center protein Z from Acorus gramineus (Dwarf sweet flag).